Reading from the N-terminus, the 607-residue chain is UvrABC system protein C (607 aa).

Residues 15-93 (RKPGVYRMLD…IKELKPPYNI (79 aa)) enclose the GIY-YIG domain. The 36-residue stretch at 203–238 (REVADQLSTDMEAAAAALEFEKAALLRDQLAAIQAV) folds into the UVR domain. The segment covering 542–551 (HRARRGKARK) has biased composition (basic residues). Positions 542 to 561 (HRARRGKARKQSTLDEIPGI) are disordered.

The protein belongs to the UvrC family. In terms of assembly, interacts with UvrB in an incision complex.

The protein localises to the cytoplasm. The UvrABC repair system catalyzes the recognition and processing of DNA lesions. UvrC both incises the 5' and 3' sides of the lesion. The N-terminal half is responsible for the 3' incision and the C-terminal half is responsible for the 5' incision. The polypeptide is UvrABC system protein C (Alcanivorax borkumensis (strain ATCC 700651 / DSM 11573 / NCIMB 13689 / SK2)).